The primary structure comprises 325 residues: Tartrate-resistant acid phosphatase type 5 (325 aa).

Positions 1–21 (MDMWTALLILQALLLPSLADG) are cleaved as a signal peptide. Residues D33, D71, Y74, and N110 each contribute to the Fe cation site. N116 and N147 each carry an N-linked (GlcNAc...) asparagine glycan. A disulfide bridge links C161 with C219. Fe cation contacts are provided by H205, H240, and H242.

Belongs to the metallophosphoesterase superfamily. Purple acid phosphatase family. Exists either as monomer or, after proteolytic processing, as a dimer of two chains linked by disulfide bond(s). Requires Fe cation as cofactor.

It is found in the lysosome. It carries out the reaction a phosphate monoester + H2O = an alcohol + phosphate. Its function is as follows. Involved in osteopontin/bone sialoprotein dephosphorylation. Its expression seems to increase in certain pathological states such as Gaucher and Hodgkin diseases, the hairy cell, the B-cell, and the T-cell leukemias. The sequence is that of Tartrate-resistant acid phosphatase type 5 (ACP5) from Homo sapiens (Human).